Consider the following 2260-residue polypeptide: Protein Ycf2 (2260 aa).

1614-1621 (GSIGTGRS) contacts ATP.

This sequence belongs to the Ycf2 family.

The protein resides in the plastid. It localises to the chloroplast stroma. Probable ATPase of unknown function. Its presence in a non-photosynthetic plant (Epifagus virginiana) and experiments in tobacco indicate that it has an essential function which is probably not related to photosynthesis. In Dioscorea elephantipes (Elephant's foot yam), this protein is Protein Ycf2.